The chain runs to 442 residues: Histidinol dehydrogenase (442 aa).

NAD(+) is bound by residues Tyr-132, Gln-194, and Asn-217. Residues Ser-243, Gln-265, and His-268 each contribute to the substrate site. Zn(2+) contacts are provided by Gln-265 and His-268. Catalysis depends on proton acceptor residues Glu-332 and His-333. 4 residues coordinate substrate: His-333, Asp-366, Glu-420, and His-425. Asp-366 lines the Zn(2+) pocket. His-425 contributes to the Zn(2+) binding site.

Belongs to the histidinol dehydrogenase family. The cofactor is Zn(2+).

It carries out the reaction L-histidinol + 2 NAD(+) + H2O = L-histidine + 2 NADH + 3 H(+). It participates in amino-acid biosynthesis; L-histidine biosynthesis; L-histidine from 5-phospho-alpha-D-ribose 1-diphosphate: step 9/9. Catalyzes the sequential NAD-dependent oxidations of L-histidinol to L-histidinaldehyde and then to L-histidine. This chain is Histidinol dehydrogenase, found in Idiomarina loihiensis (strain ATCC BAA-735 / DSM 15497 / L2-TR).